Here is a 75-residue protein sequence, read N- to C-terminus: Defense protein 6 (75 aa).

The N-terminal stretch at 1-20 is a signal peptide; the sequence is MKTCLVFAFFLVAVFAAVQA. The propeptide occupies 21-32; the sequence is EENDSPQTLPRR. 3 disulfide bridges follow: C44/C63, C49/C68, and C53/C70.

The protein belongs to the invertebrate defensin family.

It localises to the secreted. Its function is as follows. Has antibacterial activity. The polypeptide is Defense protein 6 (Lonomia obliqua (Moth)).